The primary structure comprises 441 residues: Chromosomal replication initiator protein DnaA (441 aa).

A domain I, interacts with DnaA modulators region spans residues 1–71; sequence MDIRWEEILE…AVYQVVGDRF (71 aa). The interval 71 to 99 is domain II; the sequence is FKVSILTESETSSHVLKEVIQSKFDDSDS. Positions 100 to 318 are domain III, AAA+ region; sequence DLNPEYIFSN…GIVNDLVMYK (219 aa). Residues glycine 143, glycine 145, lysine 146, and threonine 147 each coordinate ATP. Positions 319–441 are domain IV, binds dsDNA; it reads KAYEYFLLTE…HTIKHKISFQ (123 aa).

Belongs to the DnaA family. As to quaternary structure, oligomerizes as a right-handed, spiral filament on DNA at oriC.

Its subcellular location is the cytoplasm. Plays an essential role in the initiation and regulation of chromosomal replication. ATP-DnaA binds to the origin of replication (oriC) to initiate formation of the DNA replication initiation complex once per cell cycle. Binds the DnaA box (a 9 base pair repeat at the origin) and separates the double-stranded (ds)DNA. Forms a right-handed helical filament on oriC DNA; dsDNA binds to the exterior of the filament while single-stranded (ss)DNA is stabiized in the filament's interior. The ATP-DnaA-oriC complex binds and stabilizes one strand of the AT-rich DNA unwinding element (DUE), permitting loading of DNA polymerase. After initiation quickly degrades to an ADP-DnaA complex that is not apt for DNA replication. Binds acidic phospholipids. The polypeptide is Chromosomal replication initiator protein DnaA (Leptospira biflexa serovar Patoc (strain Patoc 1 / Ames)).